The chain runs to 631 residues: Cyclic nucleotide-gated channel alpha-3 (631 aa).

Residues 1 to 18 (MAKVNTQCSQPSPTQLSI) are compositionally biased toward polar residues. 2 disordered regions span residues 1-21 (MAKV…IKNA) and 71-98 (EVST…RKEE). The Cytoplasmic portion of the chain corresponds to 1-111 (MAKVNTQCSQ…VDPSSNIYYR (111 aa)). The span at 87–98 (KPPDGGEGRKEE) shows a compositional bias: basic and acidic residues. Residues 112–133 (WLTAIALPVFYNWCLLVCRACF) traverse the membrane as a helical segment. Topologically, residues 134–139 (DELQSE) are extracellular. The chain crosses the membrane as a helical span at residues 140–160 (HLTLWLVLDYSADVLYVLDML). Residues 161-187 (VRARTGFLEQGLMVRDTKRLWKHYTKT) lie on the Cytoplasmic side of the membrane. The chain crosses the membrane as a helical span at residues 188–207 (LHFKLDILSLIPTDLAYLKL). Residues 208–211 (GVNY) are Extracellular-facing. Residues 212–229 (PELRFNRLLKFSRLFEFF) form a helical membrane-spanning segment. Residues 230–239 (DRTETRTNYP) are Cytoplasmic-facing. The tract at residues 239 to 347 (PNVFRIGNLV…GNVGSMISNM (109 aa)) is ion conduction pathway. The helical transmembrane segment at 240 to 262 (NVFRIGNLVLYTLIIIHWNACIY) threads the bilayer. Residues 263-288 (FAISKFIGFGTDSWVYPNTSKPEYAR) are Extracellular-facing. A glycan (N-linked (GalNAc...) asparagine) is linked at N280. 2 helical membrane passes run 289–319 (LSRK…DEEY) and 320–344 (LFVV…GSMI). The tract at residues 306 to 309 (TIGE) is selectivity filter. The Cytoplasmic portion of the chain corresponds to 345-631 (SNMNAPRVEF…ENSEDASKTD (287 aa)). The tract at residues 349–426 (APRVEFQAKI…TLKKVRIFQD (78 aa)) is C-linker. A cyclic nucleotide-binding domain region spans residues 429-549 (AGLLVELVLK…EEKGRQILMK (121 aa)). 3',5'-cyclic GMP-binding residues include G489, E490, S492, R505, T506, and D550. Residues 567–610 (VEEKVEYLESSLDILQTRFARLLAEYSASQMKLKQRLTRLESQM) are a coiled coil.

The protein belongs to the cyclic nucleotide-gated cation channel (TC 1.A.1.5) family. CNGA3 subfamily. Forms heterotetrameric channels composed of CNGA3 and CNGB3 subunits with 3:1 stoichiometry. In terms of tissue distribution, prominently expressed in retina.

Its subcellular location is the cell membrane. It carries out the reaction Ca(2+)(in) = Ca(2+)(out). The enzyme catalyses Na(+)(in) = Na(+)(out). It catalyses the reaction K(+)(in) = K(+)(out). The catalysed reaction is NH4(+)(in) = NH4(+)(out). It carries out the reaction Rb(+)(in) = Rb(+)(out). The enzyme catalyses Li(+)(in) = Li(+)(out). It catalyses the reaction Cs(+)(in) = Cs(+)(out). Its function is as follows. Pore-forming subunit of the cone cyclic nucleotide-gated channel. Mediates cone photoresponses at bright light converting transient changes in intracellular cGMP levels into electrical signals. In the dark, cGMP levels are high and keep the channel open enabling a steady inward current carried by Na(+) and Ca(2+) ions that leads to membrane depolarization and neurotransmitter release from synaptic terminals. Upon photon absorption cGMP levels decline leading to channel closure and membrane hyperpolarization that ultimately slows neurotransmitter release and signals the presence of light, the end point of the phototransduction cascade. Pore-forming subunit of the gustatory cyclic nucleotide-gated channel. In the taste buds, may sense oral extracellular pH and conduct ion currents that modulate the excitability of taste cells. Conducts cGMP- and cAMP-gated ion currents, with permeability for monovalent and divalent cations. This Mus musculus (Mouse) protein is Cyclic nucleotide-gated channel alpha-3.